An 87-amino-acid polypeptide reads, in one-letter code: CRISPR-associated endoribonuclease Cas2 (87 aa).

A Mg(2+)-binding site is contributed by Asp-8.

The protein belongs to the CRISPR-associated endoribonuclease Cas2 protein family. As to quaternary structure, homodimer, forms a heterotetramer with a Cas1 homodimer. Mg(2+) serves as cofactor.

In terms of biological role, CRISPR (clustered regularly interspaced short palindromic repeat), is an adaptive immune system that provides protection against mobile genetic elements (viruses, transposable elements and conjugative plasmids). CRISPR clusters contain sequences complementary to antecedent mobile elements and target invading nucleic acids. CRISPR clusters are transcribed and processed into CRISPR RNA (crRNA). Functions as a ssRNA-specific endoribonuclease. Involved in the integration of spacer DNA into the CRISPR cassette. The protein is CRISPR-associated endoribonuclease Cas2 of Dictyoglomus turgidum (strain DSM 6724 / Z-1310).